Reading from the N-terminus, the 202-residue chain is Outer-membrane lipoprotein carrier protein (202 aa).

The N-terminal stretch at 1–21 (MKRLLVACCFLSGLISASALA) is a signal peptide.

It belongs to the LolA family. In terms of assembly, monomer.

The protein resides in the periplasm. Functionally, participates in the translocation of lipoproteins from the inner membrane to the outer membrane. Only forms a complex with a lipoprotein if the residue after the N-terminal Cys is not an aspartate (The Asp acts as a targeting signal to indicate that the lipoprotein should stay in the inner membrane). The sequence is that of Outer-membrane lipoprotein carrier protein from Yersinia pestis bv. Antiqua (strain Antiqua).